The chain runs to 55 residues: Large ribosomal subunit protein bL33B (55 aa).

It belongs to the bacterial ribosomal protein bL33 family.

This is Large ribosomal subunit protein bL33B from Mycolicibacterium paratuberculosis (strain ATCC BAA-968 / K-10) (Mycobacterium paratuberculosis).